The primary structure comprises 478 residues: Ribulose bisphosphate carboxylase large chain (478 aa).

A propeptide spanning residues 1-2 (MS) is cleaved from the precursor. Asn-123 and Thr-173 together coordinate substrate. The active-site Proton acceptor is the Lys-175. Position 177 (Lys-177) interacts with substrate. Mg(2+)-binding residues include Lys-201, Asp-203, and Glu-204. Lys-201 carries the N6-carboxylysine modification. Ser-208 bears the Phosphoserine mark. His-294 acts as the Proton acceptor in catalysis. Arg-295 and His-327 together coordinate substrate. Thr-330 is modified (phosphothreonine). Residue Ser-379 coordinates substrate.

Belongs to the RuBisCO large chain family. Type I subfamily. Heterohexadecamer of 8 large chains and 8 small chains; disulfide-linked. The disulfide link is formed within the large subunit homodimers. Requires Mg(2+) as cofactor. In terms of processing, the disulfide bond which can form in the large chain dimeric partners within the hexadecamer appears to be associated with oxidative stress and protein turnover.

It is found in the plastid. The protein resides in the chloroplast. The enzyme catalyses 2 (2R)-3-phosphoglycerate + 2 H(+) = D-ribulose 1,5-bisphosphate + CO2 + H2O. The catalysed reaction is D-ribulose 1,5-bisphosphate + O2 = 2-phosphoglycolate + (2R)-3-phosphoglycerate + 2 H(+). RuBisCO catalyzes two reactions: the carboxylation of D-ribulose 1,5-bisphosphate, the primary event in carbon dioxide fixation, as well as the oxidative fragmentation of the pentose substrate in the photorespiration process. Both reactions occur simultaneously and in competition at the same active site. In Lepidium virginicum (Virginia pepperweed), this protein is Ribulose bisphosphate carboxylase large chain.